The sequence spans 107 residues: U1-lycotoxin-Ls1w (107 aa).

The first 20 residues, 1–20 (MLKVLVVVALLVTLISYSSS), serve as a signal peptide directing secretion. Positions 21–41 (EGIDDLEADELLSLMANEQTR) are excised as a propeptide. 4 disulfide bridges follow: Cys44/Cys59, Cys51/Cys68, Cys58/Cys86, and Cys70/Cys84.

This sequence belongs to the neurotoxin 19 (CSTX) family. 04 (U1-Lctx) subfamily. Expressed by the venom gland.

The protein resides in the secreted. This is U1-lycotoxin-Ls1w from Lycosa singoriensis (Wolf spider).